The following is a 509-amino-acid chain: Taxoid 14-beta-hydroxylase (509 aa).

3 helical membrane-spanning segments follow: residues 20–40, 186–206, and 218–238; these read AILF…LLFL, SVVA…FFNI, and LLEI…GFAY. Cys-443 contributes to the heme binding site.

Belongs to the cytochrome P450 family.

It localises to the microsome membrane. It catalyses the reaction 10beta-hydroxytaxa-4(20),11-dien-5alpha-yl acetate + NADPH + O2 + H(+) = 10beta,14beta-dihydroxytaxa-4(20),11-dien-5alpha-yl acetate + NADP(+) + H2O. The protein operates within alkaloid biosynthesis; taxol biosynthesis. Its function is as follows. Catalyzes the conversion of 5-alpha-acetoxy-10beta-ol to 5-alpha-acetoxy-10beta,14beta-dihydroxy taxadiene. Also acts on taxa-4(20),11-dien-5-alpha-yl acetate. In Taxus cuspidata (Japanese yew), this protein is Taxoid 14-beta-hydroxylase.